The primary structure comprises 545 residues: CTP synthase (545 aa).

Positions 1 to 266 are amidoligase domain; that stretch reads MTTNYIFVTG…DDYICKRFSL (266 aa). Ser-14 lines the CTP pocket. Ser-14 lines the UTP pocket. ATP-binding positions include 15–20 and Asp-72; that span reads SLGKGI. Mg(2+) is bound by residues Asp-72 and Glu-140. CTP is bound by residues 147 to 149, 187 to 192, and Lys-223; these read DIE and KTKPTQ. Residues 187–192 and Lys-223 each bind UTP; that span reads KTKPTQ. Position 239-241 (239-241) interacts with ATP; that stretch reads KDV. The region spanning 291-542 is the Glutamine amidotransferase type-1 domain; that stretch reads TIGMVGKYIE…VKAASEYQKR (252 aa). Gly-352 contributes to the L-glutamine binding site. The active-site Nucleophile; for glutamine hydrolysis is the Cys-379. Residues 380-383, Glu-403, and Arg-470 contribute to the L-glutamine site; that span reads LGMQ. Active-site residues include His-515 and Glu-517.

The protein belongs to the CTP synthase family. In terms of assembly, homotetramer.

The enzyme catalyses UTP + L-glutamine + ATP + H2O = CTP + L-glutamate + ADP + phosphate + 2 H(+). It carries out the reaction L-glutamine + H2O = L-glutamate + NH4(+). The catalysed reaction is UTP + NH4(+) + ATP = CTP + ADP + phosphate + 2 H(+). It participates in pyrimidine metabolism; CTP biosynthesis via de novo pathway; CTP from UDP: step 2/2. Allosterically activated by GTP, when glutamine is the substrate; GTP has no effect on the reaction when ammonia is the substrate. The allosteric effector GTP functions by stabilizing the protein conformation that binds the tetrahedral intermediate(s) formed during glutamine hydrolysis. Inhibited by the product CTP, via allosteric rather than competitive inhibition. Catalyzes the ATP-dependent amination of UTP to CTP with either L-glutamine or ammonia as the source of nitrogen. Regulates intracellular CTP levels through interactions with the four ribonucleotide triphosphates. The polypeptide is CTP synthase (Cronobacter sakazakii (strain ATCC BAA-894) (Enterobacter sakazakii)).